The following is a 314-amino-acid chain: GTP cyclohydrolase FolE2 (314 aa).

The disordered stretch occupies residues 290–314 (DASAWSAPQAAAPDQQESFATGNER). Low complexity predominate over residues 291 to 304 (ASAWSAPQAAAPDQ). Over residues 305 to 314 (QESFATGNER) the composition is skewed to polar residues.

This sequence belongs to the GTP cyclohydrolase IV family.

It carries out the reaction GTP + H2O = 7,8-dihydroneopterin 3'-triphosphate + formate + H(+). Its pathway is cofactor biosynthesis; 7,8-dihydroneopterin triphosphate biosynthesis; 7,8-dihydroneopterin triphosphate from GTP: step 1/1. Functionally, converts GTP to 7,8-dihydroneopterin triphosphate. The sequence is that of GTP cyclohydrolase FolE2 from Pseudomonas putida (strain ATCC 47054 / DSM 6125 / CFBP 8728 / NCIMB 11950 / KT2440).